The chain runs to 520 residues: Non-specific phospholipase C6 (520 aa).

The N-terminal stretch at 1 to 31 (MKPSSASRFSLTFSHFLTLYCLLTQTHVAQG) is a signal peptide.

The protein belongs to the bacterial phospholipase C family. As to expression, expressed in roots, leaves, stems, flowers and siliques.

It localises to the secreted. The protein is Non-specific phospholipase C6 (NPC6) of Arabidopsis thaliana (Mouse-ear cress).